We begin with the raw amino-acid sequence, 405 residues long: MRNINVQLSHWVDIDSLEVELVERKGTGHPDYIADSASEEASRKLSLYYLKRYGTILHHNLDKTLVVGGQASPRFKGGEVLQPIYIIVAGRATTEVKTESGIESIPVGTIIIESVKEWIKEHFRYLDPEKHVIVDYKIGKGSADLVGIFEVAKKSVPLSNDTSFGVGFAPYSKLENLVYQTERYLNSKEMKAKIPEIGEDIKVMGLRKGKTIELTIAMAVISQLVSDLNHYIAVKEEAKQAILDLASKLVPDYDVKVNINTGDKIDKGIVYLTVTGTSAEHGDDGMTGRGNRATGLITPMRPMSLEATAGKNPVNHVGKIYNIVANLIAQKVSTEVKGVKNVQVEVLGQIGRPIDDPLIANVQVTTENGSLTSEMKREIEGISDEILGSITKISDLILENKVMLF.

139–144 (GKGSAD) provides a ligand contact to ATP.

Belongs to the AdoMet synthase 2 family. Mg(2+) serves as cofactor.

The catalysed reaction is L-methionine + ATP + H2O = S-adenosyl-L-methionine + phosphate + diphosphate. The protein operates within amino-acid biosynthesis; S-adenosyl-L-methionine biosynthesis; S-adenosyl-L-methionine from L-methionine: step 1/1. Catalyzes the formation of S-adenosylmethionine from methionine and ATP. This chain is S-adenosylmethionine synthase, found in Sulfurisphaera tokodaii (strain DSM 16993 / JCM 10545 / NBRC 100140 / 7) (Sulfolobus tokodaii).